Here is a 187-residue protein sequence, read N- to C-terminus: Large ribosomal subunit protein uL10 (187 aa).

Belongs to the universal ribosomal protein uL10 family. Part of the ribosomal stalk of the 50S ribosomal subunit. The N-terminus interacts with L11 and the large rRNA to form the base of the stalk. The C-terminus forms an elongated spine to which L12 dimers bind in a sequential fashion forming a multimeric L10(L12)X complex.

In terms of biological role, forms part of the ribosomal stalk, playing a central role in the interaction of the ribosome with GTP-bound translation factors. This is Large ribosomal subunit protein uL10 from Roseiflexus castenholzii (strain DSM 13941 / HLO8).